Consider the following 102-residue polypeptide: uncharacterized protein (102 aa).

The signal sequence occupies residues 1 to 19 (MFLFCFVLFCSLVFPLARG).

This is an uncharacterized protein from Saccharomyces cerevisiae (strain ATCC 204508 / S288c) (Baker's yeast).